Here is a 162-residue protein sequence, read N- to C-terminus: Solute carrier family 2, facilitated glucose transporter member 4 (162 aa).

The Extracellular segment spans residues 1 to 13 (TSIFETAGVGQPA). A helical transmembrane segment spans residues 14-34 (YATIGAGVVNTVFTLVSVFLV). Residue Asn23 participates in D-glucose binding. Topologically, residues 35 to 43 (ERAGRRTLH) are cytoplasmic. The chain crosses the membrane as a helical span at residues 44–64 (LLGLAGMCGCAILMTIALLLL). At 65-75 (ERLPAMSYVSI) the chain is on the extracellular side. A helical membrane pass occupies residues 76 to 96 (VAIFGFVAFFEIGPGPIPWFI). Glu86 and Trp94 together coordinate D-glucose. The Cytoplasmic portion of the chain corresponds to 97–107 (VAELFSQGPRP). A helical membrane pass occupies residues 108 to 128 (AAMAVAGFCNWTSNFIIGMGF). Residues 129–135 (QYIAXAM) lie on the Extracellular side of the membrane. Residues 136-156 (GPYVFLLFAVLLLAFFIFTFL) traverse the membrane as a helical segment. The Cytoplasmic segment spans residues 157–162 (KVPETR).

The protein belongs to the major facilitator superfamily. Sugar transporter (TC 2.A.1.1) family. Glucose transporter subfamily. In terms of assembly, binds to DAXX. Interacts via its N-terminus with SRFBP1. Interacts with NDUFA9. Interacts with TRARG1; the interaction is required for proper SLC2A4 recycling after insulin stimulation. In terms of processing, sumoylated. Palmitoylated. Palmitoylation by ZDHHC7 controls the insulin-dependent translocation of GLUT4 to the plasma membrane.

It localises to the cell membrane. The protein resides in the endomembrane system. The protein localises to the cytoplasm. Its subcellular location is the perinuclear region. It carries out the reaction D-glucose(out) = D-glucose(in). Its function is as follows. Insulin-regulated facilitative glucose transporter, which plays a key role in removal of glucose from circulation. Response to insulin is regulated by its intracellular localization: in the absence of insulin, it is efficiently retained intracellularly within storage compartments in muscle and fat cells. Upon insulin stimulation, translocates from these compartments to the cell surface where it transports glucose from the extracellular milieu into the cell. The sequence is that of Solute carrier family 2, facilitated glucose transporter member 4 from Canis lupus familiaris (Dog).